We begin with the raw amino-acid sequence, 328 residues long: DNA-directed RNA polymerase subunit alpha (328 aa).

The tract at residues 1 to 231 is alpha N-terminal domain (alpha-NTD); sequence MIYQMQMPAK…EHVTFFANFS (231 aa). The segment at 247 to 328 is alpha C-terminal domain (alpha-CTD); sequence DEFETMRRLL…MDITRYQMKG (82 aa).

This sequence belongs to the RNA polymerase alpha chain family. In terms of assembly, homodimer. The RNAP catalytic core consists of 2 alpha, 1 beta, 1 beta' and 1 omega subunit. When a sigma factor is associated with the core the holoenzyme is formed, which can initiate transcription.

It catalyses the reaction RNA(n) + a ribonucleoside 5'-triphosphate = RNA(n+1) + diphosphate. Its function is as follows. DNA-dependent RNA polymerase catalyzes the transcription of DNA into RNA using the four ribonucleoside triphosphates as substrates. The protein is DNA-directed RNA polymerase subunit alpha of Chlorobium luteolum (strain DSM 273 / BCRC 81028 / 2530) (Pelodictyon luteolum).